The primary structure comprises 942 residues: MSDSKYFQTTKKGEIHELKEELLSQREDKKKEAVKKVIAAMTVGKDVSMLFTHVLNCMQTHNLELKKLVYLYVMNYAKNHPDRAILAVNTFQKDASDPNPLIRALAVRTMGCIRVDNITEHLCEPLRHALKDQDPYVRKTAAVCVAKLYDVNPELVENQGFLNILNDLLGDSNPMVVANAVASLTEIDEVSKKEVFRIHSGNLNKLLAALNECTEWGQVFILNSLCKYTPRDSQEAENVCERVAPRLQHANSAVVLSAVKVLMKYMNSIGNNDVIRLFCKKMAPPLVTLLSKEPEIQFLGLRNINLIVQKRPEILQYEMKVFFCKYNDPIYVKMEKLEIMIMLANEKNIEEVLLEFKEYATEIDVEFVRKAVRAIGRCAIKIDRASERCIQVLLDLIQTKVNYVVQEAIIVIKDIFRKYPNKYEGIIATLCANLESLDEPEAKASMIWIIGEYAERIDNAHELLNSFLEGFKDENSQVQLQLLTSIVKLFLKRPKDAQQMVQTVLNLSTQESDNPDLRDRGFVYWRLLSTDFEAAKAVVLSEKPLITDTTSHLDESLLNELILNISTLASVYHKPPETFVTKLKGLNKRGLRNKEEEDEEEPDYVDDDNMNNQQGGQQQQGGYQQQQQQQQQGGYQQQQPQQQQPKSGNLIDLDLSDLGGALPNNNNNNYGNNNNNNMYSPQPQQFNGNSNDLSFLGGGGGGGEVQAPVNKVVVFGGDRSQAIQISGAFTRFQGRINLELNLLNTSQQGMSKFKIQFYQNSFGISPADQILSCGAIEVGQSTDVTIPISCNGQISNPLNPVIDMAMMVLPSQERFYFKMNFPLLCLLTETGRLDRESYLSMWKSIPESNERSVEIQVRLPHVDVDSILRRLNSKNIFEIVRKKAPNQEISFLSCKTESSVYILIELAFNISTNTCRCSSKTTSPDIMALFEHNLNLLINNQI.

HEAT repeat units lie at residues 45-82, 117-154, 156-193, 273-313, 384-421, and 458-495; these read KDVSMLFTHVLNCMQTHNLELKKLVYLYVMNYAKNHPD, NITEHLCEPLRHALKDQDPYVRKTAAVCVAKLYDVNPE, VENQGFLNILNDLLGDSNPMVVANAVASLTEIDEVSKK, DVIR…KRPE, RASERCIQVLLDLIQTKVNYVVQEAIIVIKDIFRKYPN, and DNAHELLNSFLEGFKDENSQVQLQLLTSIVKLFLKRPK. The segment at 590 to 700 is disordered; sequence GLRNKEEEDE…NDLSFLGGGG (111 aa). Acidic residues predominate over residues 596–609; that stretch reads EEDEEEPDYVDDDN. 2 stretches are compositionally biased toward low complexity: residues 613–645 and 664–677; these read QQGGQQQQGGYQQQQQQQQQGGYQQQQPQQQQP and NNNNNNYGNNNNNN. Positions 678–693 are enriched in polar residues; that stretch reads MYSPQPQQFNGNSNDL.

The protein belongs to the adaptor complexes large subunit family. Adaptor protein complex 1 (AP-1) is a heterotetramer composed of two large adaptins (gamma-type subunit and beta-type subunit), a medium adaptin (mu-type subunit) and a small adaptin (sigma-type subunit).

Its subcellular location is the golgi apparatus. It is found in the trans-Golgi network. The protein localises to the cytoplasmic vesicle. The protein resides in the clathrin-coated vesicle membrane. Its function is as follows. Subunit of clathrin-associated adaptor protein complex 1 that plays a role in protein sorting in the trans-Golgi network (TGN) and endosomes. The AP complexes mediate the recruitment of clathrin to membranes and the recognition of sorting signals within the cytosolic tails of transmembrane cargo molecules. Also involved in early steps of phagocytosis and macropinocytosis. The polypeptide is AP-1 complex subunit beta (ap1b1) (Dictyostelium discoideum (Social amoeba)).